The sequence spans 373 residues: Cytoplasmic tRNA 2-thiolation protein 1 (373 aa).

It belongs to the TtcA family. CTU1/NCS6/ATPBD3 subfamily.

It localises to the cytoplasm. The protein operates within tRNA modification; 5-methoxycarbonylmethyl-2-thiouridine-tRNA biosynthesis. Plays a central role in 2-thiolation of mcm(5)S(2)U at tRNA wobble positions of tRNA(Lys), tRNA(Glu) and tRNA(Gln). Directly binds tRNAs and probably acts by catalyzing adenylation of tRNAs, an intermediate required for 2-thiolation. It is unclear whether it acts as a sulfurtransferase that transfers sulfur from thiocarboxylated URM1 onto the uridine of tRNAs at wobble position. This Caenorhabditis elegans protein is Cytoplasmic tRNA 2-thiolation protein 1.